Reading from the N-terminus, the 182-residue chain is Alkyl hydroperoxide reductase AhpD (182 aa).

The active-site Proton donor is Cys-132. The cysteines at positions 132 and 135 are disulfide-linked. Cys-135 functions as the Cysteine sulfenic acid (-SOH) intermediate in the catalytic mechanism.

The protein belongs to the AhpD family.

The catalysed reaction is N(6)-[(R)-dihydrolipoyl]-L-lysyl-[lipoyl-carrier protein] + a hydroperoxide = N(6)-[(R)-lipoyl]-L-lysyl-[lipoyl-carrier protein] + an alcohol + H2O. Functionally, antioxidant protein with alkyl hydroperoxidase activity. Required for the reduction of the AhpC active site cysteine residues and for the regeneration of the AhpC enzyme activity. The sequence is that of Alkyl hydroperoxide reductase AhpD from Bradyrhizobium diazoefficiens (strain JCM 10833 / BCRC 13528 / IAM 13628 / NBRC 14792 / USDA 110).